Here is a 164-residue protein sequence, read N- to C-terminus: 4-hydroxy-4-methyl-2-oxoglutarate aldolase (164 aa).

Substrate contacts are provided by residues 74–77 (GGNL) and R96. D97 contacts a divalent metal cation.

This sequence belongs to the class II aldolase/RraA-like family. In terms of assembly, homotrimer. Ni(2+) is required as a cofactor. Co(2+) serves as cofactor. The cofactor is Zn(2+).

It carries out the reaction 4-hydroxy-4-methyl-2-oxoglutarate = 2 pyruvate. The catalysed reaction is oxaloacetate + H(+) = pyruvate + CO2. Its activity is regulated as follows. Competitively inhibited by oxalate, a pyruvate enolate analog. In terms of biological role, catalyzes the aldol cleavage of 4-hydroxy-4-methyl-2-oxoglutarate (HMG) into 2 molecules of pyruvate. Also contains a secondary oxaloacetate (OAA) decarboxylase activity due to the common pyruvate enolate transition state formed following C-C bond cleavage in the retro-aldol and decarboxylation reactions. In Thermus thermophilus (strain ATCC 27634 / DSM 579 / HB8), this protein is 4-hydroxy-4-methyl-2-oxoglutarate aldolase.